A 20-amino-acid polypeptide reads, in one-letter code: Ferric reductase A (20 aa).

In terms of assembly, monomer.

It catalyses the reaction 2 a Fe(II)-siderophore + NAD(+) + H(+) = 2 a Fe(III)-siderophore + NADH. Its function is as follows. Reductase activity that acts on Fe(3+)-chelates and NADH as an electron donor and requires the presence of FMN for full activity. May play a role in iron uptake. This Paracoccus denitrificans protein is Ferric reductase A (ferA).